The sequence spans 163 residues: Cyclic pyranopterin monophosphate synthase (163 aa).

Residues 75-77 (MCH) and 115-116 (ME) contribute to the substrate site. Asp130 is a catalytic residue.

The protein belongs to the MoaC family. Homohexamer; trimer of dimers.

It carries out the reaction (8S)-3',8-cyclo-7,8-dihydroguanosine 5'-triphosphate = cyclic pyranopterin phosphate + diphosphate. It functions in the pathway cofactor biosynthesis; molybdopterin biosynthesis. Catalyzes the conversion of (8S)-3',8-cyclo-7,8-dihydroguanosine 5'-triphosphate to cyclic pyranopterin monophosphate (cPMP). The protein is Cyclic pyranopterin monophosphate synthase of Bacillus pumilus (strain SAFR-032).